Consider the following 620-residue polypeptide: mRNA cap guanine-N(7) methyltransferase (620 aa).

Disordered regions lie at residues 1–176 (MLPP…APSS) and 193–304 (AHAN…DDEY). The segment covering 29–44 (RSPSMSLSPRSQNQSL) has biased composition (polar residues). 2 stretches are compositionally biased toward low complexity: residues 45–60 (PYPSSRPGSAAGSAHP) and 136–157 (PQPTTTPSSPSTSQHTPYTPHH). An mRNA cap 0 methyltransferase domain is found at 345–620 (SPIIGLKKFN…LYMGFAFEKM (276 aa)). 354–355 (NN) is an mRNA binding site. Residues lysine 358, glycine 377, aspartate 399, aspartate 428, glutamine 454, and tyrosine 459 each coordinate S-adenosyl-L-methionine.

Belongs to the class I-like SAM-binding methyltransferase superfamily. mRNA cap 0 methyltransferase family.

The protein localises to the nucleus. It carries out the reaction a 5'-end (5'-triphosphoguanosine)-ribonucleoside in mRNA + S-adenosyl-L-methionine = a 5'-end (N(7)-methyl 5'-triphosphoguanosine)-ribonucleoside in mRNA + S-adenosyl-L-homocysteine. Responsible for methylating the 5'-cap structure of mRNAs. The chain is mRNA cap guanine-N(7) methyltransferase (ABD1) from Cryptococcus neoformans var. neoformans serotype D (strain JEC21 / ATCC MYA-565) (Filobasidiella neoformans).